The sequence spans 356 residues: Phosphoribosyl pyrophosphate synthase-associated protein 1 (356 aa).

An N-acetylmethionine modification is found at methionine 1. 2 positions are modified to phosphoserine: serine 177 and serine 215.

This sequence belongs to the ribose-phosphate pyrophosphokinase family. As to quaternary structure, binds to PRPS1 and PRPS2.

Its function is as follows. Seems to play a negative regulatory role in 5-phosphoribose 1-diphosphate synthesis. In Mus musculus (Mouse), this protein is Phosphoribosyl pyrophosphate synthase-associated protein 1 (Prpsap1).